Consider the following 69-residue polypeptide: UPF0150 protein Ta0767 (69 aa).

It belongs to the UPF0150 family.

The chain is UPF0150 protein Ta0767 from Thermoplasma acidophilum (strain ATCC 25905 / DSM 1728 / JCM 9062 / NBRC 15155 / AMRC-C165).